We begin with the raw amino-acid sequence, 268 residues long: Undecaprenyl-diphosphatase (268 aa).

Helical transmembrane passes span F47–L67, F83–G103, L109–V129, F144–V164, A184–L204, I217–F237, and L248–L268.

This sequence belongs to the UppP family.

It localises to the cell inner membrane. It catalyses the reaction di-trans,octa-cis-undecaprenyl diphosphate + H2O = di-trans,octa-cis-undecaprenyl phosphate + phosphate + H(+). Its function is as follows. Catalyzes the dephosphorylation of undecaprenyl diphosphate (UPP). Confers resistance to bacitracin. The sequence is that of Undecaprenyl-diphosphatase from Rhodopseudomonas palustris (strain ATCC BAA-98 / CGA009).